The following is a 62-amino-acid chain: Phycobilisome degradation protein NblA homolog 1 (62 aa).

It to Synechococcus PCC 7942 NblA and some, to chloroplast ycf18.

This chain is Phycobilisome degradation protein NblA homolog 1, found in Synechocystis sp. (strain ATCC 27184 / PCC 6803 / Kazusa).